We begin with the raw amino-acid sequence, 351 residues long: Cytoplasmic dynein 2 light intermediate chain 1 (351 aa).

Positions 304–351 (TLKDVKDPAKDPQYAESEVDEMRIQKDQELEQYKRSSSKSWKQIELDS) are disordered. Positions 323-337 (DEMRIQKDQELEQYK) are enriched in basic and acidic residues.

Belongs to the dynein light intermediate chain family. Light intermediate chain of the cytoplasmic dynein complex 2, a multisubunit complex composed at least of eleven different proteins. The cytoplasmic dynein 2 complex consists of two catalytic heavy chains (HCs) and a number of non-catalytic subunits presented by intermediate chains (ICs), light intermediate chains (LICs) and light chains (LCs). Among them, a heavy chain (DYNC2H1), two intermediate chains (DYNC2I2 and DYNC2I1), a light intermediate chain (DYNC2LI1), and a light chain (DYNLT2B) are unique to the dynein-2 complex, but a subset of light chains are also shared by dynein-1 and dynein-2 complexes. Dynein-2 complex is built around two copies of cytoplasmic dynein 2 heavy chain 1 (DYNC2H1). The C-terminal region forms the motor domain, which converts the energy from ATP hydrolysis into movement. Its N-terminal region forms the tail, an extended structure that binds the other subunits and holds the two heavy chains in a homodimer. Interacts with DYNC2H1 (via N-terminus); this interaction stabilizes the dynein-2 complex structure.

It is found in the cytoplasm. Its subcellular location is the cell projection. It localises to the cilium. The protein localises to the cytoskeleton. The protein resides in the cilium basal body. It is found in the cilium axoneme. Its subcellular location is the microtubule organizing center. It localises to the centrosome. Acts as one of several non-catalytic accessory components of the cytoplasmic dynein 2 complex (dynein-2 complex), a motor protein complex that drives the movement of cargos along microtubules within cilia and flagella in concert with the intraflagellar transport (IFT) system, facilitating the assembly of these organelles. Involved in the regulation of ciliary length. The sequence is that of Cytoplasmic dynein 2 light intermediate chain 1 (DYNC2LI1) from Bos taurus (Bovine).